We begin with the raw amino-acid sequence, 228 residues long: Thymidylate kinase (228 aa).

20-27 (GGEGSGKS) serves as a coordination point for ATP.

Belongs to the thymidylate kinase family.

The catalysed reaction is dTMP + ATP = dTDP + ADP. Phosphorylation of dTMP to form dTDP in both de novo and salvage pathways of dTTP synthesis. The sequence is that of Thymidylate kinase from Afipia carboxidovorans (strain ATCC 49405 / DSM 1227 / KCTC 32145 / OM5) (Oligotropha carboxidovorans).